We begin with the raw amino-acid sequence, 432 residues long: Trigger factor (432 aa).

The PPIase FKBP-type domain occupies Glu161 to Pro246.

It belongs to the FKBP-type PPIase family. Tig subfamily. As to quaternary structure, homodimer and monomer. In vivo most of the ribosomes are in complex with monomeric TF. Uncomplexed TF, however, is in a monomer-dimer equilibrium with approximately two thirds of TF existing in a dimeric state.

The protein localises to the cytoplasm. The catalysed reaction is [protein]-peptidylproline (omega=180) = [protein]-peptidylproline (omega=0). Its function is as follows. Involved in protein export. Acts as a chaperone by maintaining the newly synthesized protein in an open conformation. Functions as a peptidyl-prolyl cis-trans isomerase. This is Trigger factor from Escherichia fergusonii (strain ATCC 35469 / DSM 13698 / CCUG 18766 / IAM 14443 / JCM 21226 / LMG 7866 / NBRC 102419 / NCTC 12128 / CDC 0568-73).